The chain runs to 612 residues: uncharacterized protein (612 aa).

The disordered stretch occupies residues 213 to 238; that stretch reads ASAEDGEEAAAGAGKRQVARSGARKR. The VWFA domain occupies 421 to 610; the sequence is DLACLLLADL…ERLLQLYRRL (190 aa).

It is found in the cytoplasm. Functionally, component of the anaerobic respiratory chain that transforms nitrate to dinitrogen (denitrification). Function unknown, but essential for the denitrification process. This is an uncharacterized protein from Pseudomonas aeruginosa (strain ATCC 15692 / DSM 22644 / CIP 104116 / JCM 14847 / LMG 12228 / 1C / PRS 101 / PAO1).